A 369-amino-acid chain; its full sequence is Peptide chain release factor 2 (369 aa).

Residue Gln250 is modified to N5-methylglutamine.

This sequence belongs to the prokaryotic/mitochondrial release factor family. In terms of processing, methylated by PrmC. Methylation increases the termination efficiency of RF2.

It localises to the cytoplasm. Functionally, peptide chain release factor 2 directs the termination of translation in response to the peptide chain termination codons UGA and UAA. The sequence is that of Peptide chain release factor 2 (prfB) from Rickettsia typhi (strain ATCC VR-144 / Wilmington).